A 139-amino-acid chain; its full sequence is Class I hydrophobin 1 (139 aa).

The first 21 residues, 1–21 (MFFRISTVFVVALAAFAAASP), serve as a signal peptide directing secretion. Intrachain disulfides connect cysteine 57–cysteine 118, cysteine 64–cysteine 112, cysteine 65–cysteine 98, and cysteine 119–cysteine 132.

It belongs to the fungal hydrophobin family. As to quaternary structure, self-assembles to form functional amyloid fibrils called rodlets. Self-assembly into fibrillar rodlets occurs spontaneously at hydrophobic:hydrophilic interfaces and the rodlets further associate laterally to form amphipathic monolayers.

The protein resides in the secreted. It localises to the cell wall. Its function is as follows. Aerial growth, conidiation, and dispersal of filamentous fungi in the environment rely upon a capability of their secreting small amphipathic proteins called hydrophobins (HPBs) with low sequence identity. Class I can self-assemble into an outermost layer of rodlet bundles on aerial cell surfaces, conferring cellular hydrophobicity that supports fungal growth, development and dispersal; whereas Class II form highly ordered films at water-air interfaces through intermolecular interactions but contribute nothing to the rodlet structure. Hah1 is a class I hydrophobin that is involved in aerial growth of mycelia, but does not play a role in pathogenesis. This chain is Class I hydrophobin 1, found in Heterobasidion annosum (Root rot fungus).